Reading from the N-terminus, the 548-residue chain is Membrane protein insertase YidC (548 aa).

Residues 6–26 traverse the membrane as a helical segment; sequence NLLVIALLFVSFMIWQAWEQD. Residues 28–56 form a disordered region; sequence NPQPQTQQTTQTTTTAAGSAADQGVPASG. Residues 29–42 show a composition bias toward low complexity; that stretch reads PQPQTQQTTQTTTT. Transmembrane regions (helical) follow at residues 350 to 370, 424 to 444, 458 to 478, and 499 to 519; these read FVGN…GIMY, FPLI…MGSI, LSAQ…MFFI, and PVIF…YYIV.

The protein belongs to the OXA1/ALB3/YidC family. Type 1 subfamily. As to quaternary structure, interacts with the Sec translocase complex via SecD. Specifically interacts with transmembrane segments of nascent integral membrane proteins during membrane integration.

The protein localises to the cell inner membrane. Functionally, required for the insertion and/or proper folding and/or complex formation of integral membrane proteins into the membrane. Involved in integration of membrane proteins that insert both dependently and independently of the Sec translocase complex, as well as at least some lipoproteins. Aids folding of multispanning membrane proteins. This is Membrane protein insertase YidC from Salmonella enteritidis PT4 (strain P125109).